A 467-amino-acid polypeptide reads, in one-letter code: Mitogen-activated protein kinase kinase kinase 8 (467 aa).

A Phosphothreonine modification is found at T80. 2 positions are modified to phosphoserine: S138 and S141. Residues 144–152 and K167 contribute to the ATP site; that span reads VPRGAFGKV. A Protein kinase domain is found at 146 to 388; the sequence is RGAFGKVYLA…AADLLKHEAL (243 aa). D253 functions as the Proton acceptor in the catalytic mechanism. T290 is subject to Phosphothreonine. Phosphoserine occurs at positions 400 and 443.

This sequence belongs to the protein kinase superfamily. STE Ser/Thr protein kinase family. MAP kinase kinase kinase subfamily. In terms of assembly, forms a ternary complex with NFKB1/p105 and TNIP2. Interacts with NFKB1; the interaction increases the stability of MAP3K8 but inhibits its MEK phosphorylation activity, whereas loss of interaction following LPS stimulation leads to its degradation. Interacts with CD40 and TRAF6; the interaction is required for ERK activation. Interacts with KSR2; the interaction inhibits ERK and NF-kappa-B activation. Requires Mg(2+) as cofactor. In terms of processing, autophosphorylated. Expressed in spleen, thymus, liver and lung.

Its subcellular location is the cytoplasm. It carries out the reaction L-seryl-[protein] + ATP = O-phospho-L-seryl-[protein] + ADP + H(+). The catalysed reaction is L-threonyl-[protein] + ATP = O-phospho-L-threonyl-[protein] + ADP + H(+). Required for lipopolysaccharide (LPS)-induced, TLR4-mediated activation of the MAPK/ERK pathway in macrophages, thus being critical for production of the pro-inflammatory cytokine TNF-alpha (TNF) during immune responses. Involved in the regulation of T-helper cell differentiation and IFNG expression in T-cells. Involved in mediating host resistance to bacterial infection through negative regulation of type I interferon (IFN) production. Transduces CD40 and TNFRSF1A signals that activate ERK in B-cells and macrophages, and thus may play a role in the regulation of immunoglobulin production. May also play a role in the transduction of TNF signals that activate JNK and NF-kappa-B in some cell types. In adipocytes, activates MAPK/ERK pathway in an IKBKB-dependent manner in response to IL1B and TNF, but not insulin, leading to induction of lipolysis. Plays a role in the cell cycle. The protein is Mitogen-activated protein kinase kinase kinase 8 (Map3k8) of Rattus norvegicus (Rat).